A 1407-amino-acid chain; its full sequence is DNA-directed RNA polymerase subunit beta' (1407 aa).

Zn(2+) is bound by residues C70, C72, C85, and C88. Mg(2+) is bound by residues D460, D462, and D464. Residues C814, C888, C895, and C898 each contribute to the Zn(2+) site.

This sequence belongs to the RNA polymerase beta' chain family. In terms of assembly, the RNAP catalytic core consists of 2 alpha, 1 beta, 1 beta' and 1 omega subunit. When a sigma factor is associated with the core the holoenzyme is formed, which can initiate transcription. Mg(2+) is required as a cofactor. It depends on Zn(2+) as a cofactor.

The enzyme catalyses RNA(n) + a ribonucleoside 5'-triphosphate = RNA(n+1) + diphosphate. DNA-dependent RNA polymerase catalyzes the transcription of DNA into RNA using the four ribonucleoside triphosphates as substrates. This chain is DNA-directed RNA polymerase subunit beta', found in Cellvibrio japonicus (strain Ueda107) (Pseudomonas fluorescens subsp. cellulosa).